A 330-amino-acid polypeptide reads, in one-letter code: 5'-AMP-activated protein kinase subunit gamma-1 (330 aa).

Positions 1–12 are enriched in low complexity; it reads MESVAAESAPAP. Residues 1-25 form a disordered region; it reads MESVAAESAPAPENEHSQETPESNS. CBS domains are found at residues 42–102, 124–186, and 197–259; these read PTSS…KSAL, SFKP…PKPE, and IGTY…NLDV. Residues R69, 84–89, V129, 150–151, and K169 contribute to the ADP site; these read MLTITD and HR. AMP contacts are provided by residues R69, 84–89, V129, H150, 150–151, K169, T199, A204, 225–226, and 241–244; these read MLTITD, HR, SA, and SKFD. ATP is bound by residues R69, 84 to 89, V129, 150 to 151, R151, and K169; these read MLTITD and HR. Residues 137-158 carry the AMPK pseudosubstrate motif; it reads LFDAVSSLIRNKIHRLPVIDPE. 241-244 lines the ADP pocket; sequence SKFD. 241 to 244 is an ATP binding site; that stretch reads SKFD. Residue S260 is modified to Phosphoserine; by ULK1. T262 is subject to Phosphothreonine; by ULK1. R268 lines the ADP pocket. Position 268 (R268) interacts with AMP. Position 268 (R268) interacts with ATP. Position 269 is a phosphoserine; by ULK1 (S269). In terms of domain architecture, CBS 4 spans 271–328; sequence YFEGVLKCYLHETLEAIINRLVEAEVHRLVVVDEHDVVKGIVSLSDILQALVLTGGEK. ADP contacts are provided by residues L276 and 297–298; that span reads HR. AMP-binding positions include L276, H297, 297–298, and 313–316; these read HR and SLSD. Residues L276 and 297–298 each bind ATP; that span reads HR.

The protein belongs to the 5'-AMP-activated protein kinase gamma subunit family. As to quaternary structure, AMPK is a heterotrimer of an alpha catalytic subunit (PRKAA1 or PRKAA2), a beta (PRKAB1 or PRKAB2) and a gamma non-catalytic subunits (PRKAG1, PRKAG2 or PRKAG3). Interacts with FNIP1 and FNIP2. Post-translationally, phosphorylated by ULK1 and ULK2; leading to negatively regulate AMPK activity and suggesting the existence of a regulatory feedback loop between ULK1, ULK2 and AMPK. There is some ambiguity for a phosphosite: Ser-260/Thr-262. In terms of processing, glycosylated; O-GlcNAcylated by OGT, promoting the AMP-activated protein kinase (AMPK) activity. As to expression, highly expressed in heart and brain, also found in kidney, white adipose tissue, lung and spleen.

Functionally, AMP/ATP-binding subunit of AMP-activated protein kinase (AMPK), an energy sensor protein kinase that plays a key role in regulating cellular energy metabolism. In response to reduction of intracellular ATP levels, AMPK activates energy-producing pathways and inhibits energy-consuming processes: inhibits protein, carbohydrate and lipid biosynthesis, as well as cell growth and proliferation. AMPK acts via direct phosphorylation of metabolic enzymes, and by longer-term effects via phosphorylation of transcription regulators. Also acts as a regulator of cellular polarity by remodeling the actin cytoskeleton; probably by indirectly activating myosin. Gamma non-catalytic subunit mediates binding to AMP, ADP and ATP, leading to activate or inhibit AMPK: AMP-binding results in allosteric activation of alpha catalytic subunit (PRKAA1 or PRKAA2) both by inducing phosphorylation and preventing dephosphorylation of catalytic subunits. ADP also stimulates phosphorylation, without stimulating already phosphorylated catalytic subunit. ATP promotes dephosphorylation of catalytic subunit, rendering the AMPK enzyme inactive. This chain is 5'-AMP-activated protein kinase subunit gamma-1 (Prkag1), found in Rattus norvegicus (Rat).